Here is a 283-residue protein sequence, read N- to C-terminus: Undecaprenyl-diphosphatase (283 aa).

8 helical membrane passes run 4–24 (LLIL…FLPI), 45–65 (ADLF…YEYW), 91–111 (QLGL…FTLA), 118–138 (LFNP…IFYV), 153–173 (VSLK…IPGT), 194–214 (AEFS…LDLL), 228–248 (ILGV…RWLV), and 258–278 (IFAW…WIFG).

Belongs to the UppP family.

The protein localises to the cell inner membrane. The catalysed reaction is di-trans,octa-cis-undecaprenyl diphosphate + H2O = di-trans,octa-cis-undecaprenyl phosphate + phosphate + H(+). Functionally, catalyzes the dephosphorylation of undecaprenyl diphosphate (UPP). Confers resistance to bacitracin. The chain is Undecaprenyl-diphosphatase from Psychrobacter sp. (strain PRwf-1).